The primary structure comprises 195 residues: Coagulogen (195 aa).

The first 20 residues, 1-20 (MEKKLLGIAILFVTVVSVLA), serve as a signal peptide directing secretion. Cystine bridges form between cysteine 28–cysteine 188, cysteine 30–cysteine 115, cysteine 80–cysteine 182, cysteine 85–cysteine 141, cysteine 95–cysteine 189, cysteine 108–cysteine 161, cysteine 147–cysteine 191, and cysteine 155–cysteine 193.

The protein belongs to the coagulin family. Coagulogen is cleaved after Arg-38 and Arg-66 by a clotting enzyme contained in the hemocyte and activated by a bacterial endotoxin (lipopolysaccharide). This cleavage releases the peptide C and leaves 2 chains of coagulin, A and B, linked by two disulfide bonds. Coagulin molecules interlink to form a gel. In terms of tissue distribution, hemolymph.

Its subcellular location is the secreted. Functionally, coagulogen is a gel-forming protein of hemolymph; it hinders the spread of invaders by immobilizing them. The protein is Coagulogen of Limulus polyphemus (Atlantic horseshoe crab).